The following is a 308-amino-acid chain: UPF0282 protein M164_2122 (308 aa).

This sequence belongs to the UPF0282 family.

This is UPF0282 protein M164_2122 from Saccharolobus islandicus (strain M.16.4 / Kamchatka #3) (Sulfolobus islandicus).